We begin with the raw amino-acid sequence, 344 residues long: Acireductone dioxygenase (344 aa).

Fe(2+) is bound by residues H92, H94, E98, and H137. Ni(2+)-binding residues include H92, H94, E98, and H137.

The protein belongs to the acireductone dioxygenase (ARD) family. Fe(2+) serves as cofactor. Ni(2+) is required as a cofactor.

The protein localises to the cytoplasm. It localises to the nucleus. The catalysed reaction is 1,2-dihydroxy-5-(methylsulfanyl)pent-1-en-3-one + O2 = 4-methylsulfanyl-2-oxobutanoate + formate + 2 H(+). It catalyses the reaction 1,2-dihydroxy-5-(methylsulfanyl)pent-1-en-3-one + O2 = 3-(methylsulfanyl)propanoate + CO + formate + 2 H(+). It participates in amino-acid biosynthesis; L-methionine biosynthesis via salvage pathway; L-methionine from S-methyl-5-thio-alpha-D-ribose 1-phosphate: step 5/6. In terms of biological role, catalyzes 2 different reactions between oxygen and the acireductone 1,2-dihydroxy-3-keto-5-methylthiopentene (DHK-MTPene) depending upon the metal bound in the active site. Fe-containing acireductone dioxygenase (Fe-ARD) produces formate and 2-keto-4-methylthiobutyrate (KMTB), the alpha-ketoacid precursor of methionine in the methionine recycle pathway. Ni-containing acireductone dioxygenase (Ni-ARD) produces methylthiopropionate, carbon monoxide and formate, and does not lie on the methionine recycle pathway. The protein is Acireductone dioxygenase of Leishmania braziliensis.